We begin with the raw amino-acid sequence, 799 residues long: Cadherin-8 (799 aa).

A signal peptide spans 1–29 (MPERLAETLLDLWTPLIILWITLPSFVYM). A propeptide spanning residues 30–61 (APMNQAHVLTTGSPLELSRQSEEMRILNRSKR) is cleaved from the precursor. Cadherin domains follow at residues 62-167 (GWVW…APEF), 168-276 (LNGP…PPKF), 277-391 (AQSL…PPVF), 392-494 (SSPT…DNAP), and 495-616 (EFAS…YVLP). Residues 62 to 621 (GWVWNQMFVL…PYVLPIGLSM (560 aa)) lie on the Extracellular side of the membrane. An N-linked (GlcNAc...) asparagine glycan is attached at Asn188. Residues Asn463, Asn473, and Asn544 are each glycosylated (N-linked (GlcNAc...) asparagine). Residues 622 to 642 (GALIAILACIILLLVIVVLFV) traverse the membrane as a helical segment. The Cytoplasmic segment spans residues 643–799 (TLRRHKNEPL…YSVGESDKET (157 aa)). Phosphoserine is present on Ser795.

It is found in the cell membrane. Functionally, cadherins are calcium-dependent cell adhesion proteins. They preferentially interact with themselves in a homophilic manner in connecting cells; cadherins may thus contribute to the sorting of heterogeneous cell types. In Rattus norvegicus (Rat), this protein is Cadherin-8 (Cdh8).